The following is a 178-amino-acid chain: Nucleoplasmin-3 (178 aa).

Alanine 2 carries the N-acetylalanine modification. Residues serine 13 and serine 16 each carry the phosphoserine modification. Arginine 27 is modified (omega-N-methylarginine). Residues threonine 141–proline 178 form a disordered region. The segment covering valine 146–glutamate 164 has biased composition (acidic residues). Phosphoserine occurs at positions 147, 151, and 158.

It belongs to the nucleoplasmin family. Interacts with NPM (via N-terminus). Forms a pentamer with NPM at a ratio 4:1 (NPM3/NPM). Two pentamers form a decamer. In terms of processing, phosphorylated. Ubiquitous.

It is found in the nucleus. It localises to the nucleolus. Its function is as follows. Plays a role in the regulation of diverse cellular processes such as ribosome biogenesis, chromatin remodeling or protein chaperoning. Modulates the histone chaperone function and the RNA-binding activity of nucleolar phosphoprotein B23/NPM. Efficiently mediates chromatin remodeling when included in a pentamer containing NPM3 and NPM. This Homo sapiens (Human) protein is Nucleoplasmin-3 (NPM3).